Here is a 582-residue protein sequence, read N- to C-terminus: Vesicular glutamate transporter 2 (582 aa).

Topologically, residues 1-71 (MESVKQRILA…CTCFGLPRRY (71 aa)) are cytoplasmic. A helical transmembrane segment spans residues 72-92 (IIAIMSGLGFCISFGIRCNLG). The Vesicular portion of the chain corresponds to 93 to 125 (VAIVDMVNNSTIHRGGKVIKEKAKFNWDPETVG). N-linked (GlcNAc...) asparagine glycosylation is found at N100 and N101. The chain crosses the membrane as a helical span at residues 126-146 (MIHGSFFWGYIITQIPGGYIA). Topologically, residues 147 to 148 (SR) are cytoplasmic. A helical membrane pass occupies residues 149 to 169 (LAANRVFGAAILLTSTLNMLI). Over 170 to 177 (PSAARVHY) the chain is Vesicular. A helical membrane pass occupies residues 178–198 (GCVIFVRILQGLVEGVTYPAC). Residues 199 to 216 (HGIWSKWAPPLERSRLAT) lie on the Cytoplasmic side of the membrane. Residues 217–237 (TSFCGSYAGAVIAMPLAGILV) traverse the membrane as a helical segment. At 238 to 244 (QYTGWSS) the chain is on the vesicular side. Residues 245-265 (VFYVYGSFGMVWYMFWLLVSY) traverse the membrane as a helical segment. Residues 266–310 (ESPAKHPTITDEERRYIEESIGESANLLGAMEKFKTPWRKFFTSM) lie on the Cytoplasmic side of the membrane. Residues 311-331 (PVYAIIVANFCRSWTFYLLLI) form a helical membrane-spanning segment. Residues 332–349 (SQPAYFEEVFGFEISKVG) are Vesicular-facing. The helical transmembrane segment at 350–370 (MLSAVPHLVMTIIVPIGGQIA) threads the bilayer. Topologically, residues 371–386 (DFLRSKQILSTTTVRK) are cytoplasmic. A helical transmembrane segment spans residues 387–407 (IMNCGGFGMEATLLLVVGYSH). At 408-409 (TR) the chain is on the vesicular side. A helical membrane pass occupies residues 410–430 (GVAISFLVLAVGFSGFAISGF). Topologically, residues 431 to 443 (NVNHLDIAPRYAS) are cytoplasmic. A helical membrane pass occupies residues 444–464 (ILMGISDGVGTLSGMVCPIIV). Residues 465-477 (GAMTKNKSREEWQ) are Vesicular-facing. N-linked (GlcNAc...) asparagine glycosylation is present at N470. The helical transmembrane segment at 478-498 (YVFLIAALVHYGGVIFYALFA) threads the bilayer. Over 499–582 (SGEKQPWADP…YTYKDRDDYS (84 aa)) the chain is Cytoplasmic.

This sequence belongs to the major facilitator superfamily. Sodium/anion cotransporter family. VGLUT subfamily. In terms of tissue distribution, expressed in brain. Expressed in hippocampal neurons (at protein level).

The protein localises to the cytoplasmic vesicle. The protein resides in the secretory vesicle. It is found in the synaptic vesicle membrane. Its subcellular location is the synapse. It localises to the synaptosome. The protein localises to the cell membrane. The enzyme catalyses L-glutamate(out) = L-glutamate(in). It catalyses the reaction K(+)(in) + H(+)(out) = K(+)(out) + H(+)(in). The catalysed reaction is 3 Na(+)(out) + phosphate(out) = 3 Na(+)(in) + phosphate(in). It carries out the reaction phosphate(in) = phosphate(out). The enzyme catalyses chloride(in) = chloride(out). Chloride channel activity is allosterically activated by lumenal H(+) and Cl(-) leading to synaptic vesicles acidification. The L-glutamate transport activity is allosterically activated by lumenal H(+) and Cl(-). The allosteric requirement for H(+) efficiently prevents non-vesicular efflux across the plasma membrane. The L-glutamate uniporter activity exhibits a biphasic dependence on chloride concentration. Multifunctional transporter that transports L-glutamate as well as multiple ions such as chloride, proton, potassium, sodium and phosphate. At the synaptic vesicle membrane, mainly functions as a uniporter which transports preferentially L-glutamate but also, phosphate from the cytoplasm into synaptic vesicles at presynaptic nerve terminals of excitatory neural cells. The L-glutamate or phosphate uniporter activity is electrogenic and is driven by the proton electrochemical gradient, mainly by the electrical gradient established by the vacuolar H(+)-ATPase across the synaptic vesicle membrane. In addition, functions as a chloride channel that allows a chloride permeation through the synaptic vesicle membrane therefore affects the proton electrochemical gradient and promotes synaptic vesicles acidification. Moreover, functions as a vesicular K(+)/H(+) antiport allowing to maintain the electrical gradient and to decrease chemical gradient and therefore sustain vesicular glutamate uptake. The vesicular H(+)/H(+) antiport activity is electroneutral. At the plasma membrane, following exocytosis, functions as a symporter of Na(+) and phosphate from the extracellular space to the cytoplasm allowing synaptic phosphate homeostasis regulation. The symporter activity is driven by an inside negative membrane potential and is electrogenic. Also involved in the regulation of retinal hyaloid vessel regression during postnatal development. May also play a role in the endocrine glutamatergic system of other tissues such as pineal gland and pancreas. This chain is Vesicular glutamate transporter 2, found in Mus musculus (Mouse).